The following is a 100-amino-acid chain: Pregnancy-associated protein bPAP (100 aa).

The tract at residues 1–40 is disordered; it reads DSELAGPRGARGPHGLSGPHGLSGLXGPXGYTGPIGMXGL. Positions 13–29 are enriched in low complexity; sequence PHGLSGPHGLSGLXGPX.

In terms of tissue distribution, detected at high levels in the urine of pregnant females (at protein level) and at far lower levels in the urine of nonpregnant females.

This Bos taurus (Bovine) protein is Pregnancy-associated protein bPAP.